A 285-amino-acid polypeptide reads, in one-letter code: Iodotyrosine deiodinase 1 (285 aa).

The helical transmembrane segment at 1-21 (MFLLTPVLVAVVCILVIWVFK) threads the bilayer. Residues 96–100 (RRSIR) and 124–125 (SG) contribute to the FMN site. 3,5-diiodo-L-tyrosine is bound by residues Ala-126, Glu-153, Tyr-157, and Lys-178. Residues Ala-126, Glu-153, Tyr-157, and Lys-178 each contribute to the 3-iodo-L-tyrosine site. FMN contacts are provided by residues 233 to 235 (TTT) and Arg-275.

The protein belongs to the nitroreductase family. In terms of assembly, homodimer. It depends on FMN as a cofactor.

It localises to the cell membrane. The protein localises to the cytoplasmic vesicle membrane. The catalysed reaction is 2 iodide + L-tyrosine + 2 NADP(+) = 3,5-diiodo-L-tyrosine + 2 NADPH + H(+). It carries out the reaction iodide + L-tyrosine + NADP(+) = 3-iodo-L-tyrosine + NADPH. It catalyses the reaction 3-iodo-L-tyrosine + iodide + NADP(+) = 3,5-diiodo-L-tyrosine + NADPH + H(+). The enzyme catalyses L-tyrosine + chloride + NADP(+) = 3-chloro-L-tyrosine + NADPH. The catalysed reaction is bromide + L-tyrosine + NADP(+) = 3-bromo-L-tyrosine + NADPH. Functionally, catalyzes the dehalogenation of halotyrosines such as 3-bromo-L-tyrosine, 3-chloro-L-tyrosine, 3-iodo-L-tyrosine and 3,5-diiodo-L-tyrosine. During thyroid hormone biosynthesis, facilitates iodide salvage by catalysing the oxidative NADPH-dependent deiodination of the halogenated by-products of thyroid hormone production, monoiodotyrosine (L-MIT) and diiodotyrosine (L-DIT). The scavanged iodide can then reenter the hormone-producing pathways. Acts more efficiently on 3-iodo-L-tyrosine than 3,5-diiodo-L-tyrosine. This Rattus norvegicus (Rat) protein is Iodotyrosine deiodinase 1 (Iyd).